Here is a 436-residue protein sequence, read N- to C-terminus: Hydrogenobyrinate a,c-diamide synthase (436 aa).

One can recognise a GATase cobBQ-type domain in the interval 244–435 (RIAVARDDAF…MHVIDFSGEA (192 aa)). Cys-327 acts as the Nucleophile in catalysis.

It belongs to the CobB/CbiA family. Mg(2+) is required as a cofactor.

The enzyme catalyses hydrogenobyrinate + 2 L-glutamine + 2 ATP + 2 H2O = hydrogenobyrinate a,c-diamide + 2 L-glutamate + 2 ADP + 2 phosphate + 2 H(+). It participates in cofactor biosynthesis; adenosylcobalamin biosynthesis; cob(II)yrinate a,c-diamide from precorrin-2 (aerobic route): step 9/10. Catalyzes the ATP-dependent amidation of the two carboxylate groups at positions a and c of hydrogenobyrinate, using either L-glutamine or ammonia as the nitrogen source. The protein is Hydrogenobyrinate a,c-diamide synthase of Brucella suis biovar 1 (strain 1330).